The primary structure comprises 185 residues: Ribosome-recycling factor (185 aa).

The interval 144 to 164 (KEGEAGEDEVGRAEKDLDKTT) is disordered.

The protein belongs to the RRF family.

It is found in the cytoplasm. In terms of biological role, responsible for the release of ribosomes from messenger RNA at the termination of protein biosynthesis. May increase the efficiency of translation by recycling ribosomes from one round of translation to another. This chain is Ribosome-recycling factor, found in Mycobacterium tuberculosis (strain CDC 1551 / Oshkosh).